The following is a 298-amino-acid chain: Urease accessory protein UreD 3 (298 aa).

Residues 1–30 form a disordered region; it reads MADEAGTRSAGGRPIPAAEPLRPALSRQRS.

This sequence belongs to the UreD family. As to quaternary structure, ureD, UreF and UreG form a complex that acts as a GTP-hydrolysis-dependent molecular chaperone, activating the urease apoprotein by helping to assemble the nickel containing metallocenter of UreC. The UreE protein probably delivers the nickel.

Its subcellular location is the cytoplasm. Functionally, required for maturation of urease via the functional incorporation of the urease nickel metallocenter. This Methylorubrum extorquens (strain PA1) (Methylobacterium extorquens) protein is Urease accessory protein UreD 3.